Reading from the N-terminus, the 176-residue chain is Urease accessory protein UreE (176 aa).

It belongs to the UreE family.

Its subcellular location is the cytoplasm. In terms of biological role, involved in urease metallocenter assembly. Binds nickel. Probably functions as a nickel donor during metallocenter assembly. In Helicobacter bizzozeronii, this protein is Urease accessory protein UreE.